A 509-amino-acid polypeptide reads, in one-letter code: Maturase K (509 aa).

The protein belongs to the intron maturase 2 family. MatK subfamily.

The protein localises to the plastid. Its subcellular location is the chloroplast. Functionally, usually encoded in the trnK tRNA gene intron. Probably assists in splicing its own and other chloroplast group II introns. This chain is Maturase K, found in Sequoia sempervirens (California redwood).